Consider the following 91-residue polypeptide: LYR motif-containing protein 4 (91 aa).

2 residues coordinate pantetheine 4'-phosphate: Arg-6 and Lys-44. Lys-47 carries the post-translational modification N6-succinyllysine.

This sequence belongs to the complex I LYR family. In terms of assembly, homodimer. Component of the mitochondrial core iron-sulfur cluster (ISC) complex composed of NFS1, LYRM4, NDUFAB1, ISCU, FXN, and FDX2; this complex is a heterohexamer containing two copies of each monomer. Component of the cyteine desulfurase complex composed of NFS1, LYRM4 and NDUFAB1; this complex contributes to the stability and cysteine desulfurase activity of NFS1. Interacts with FXN; this interaction is nickel-dependent. Interacts with the cytoplasmic form of NFS1; the complex increases the stability of NFS1. Forms a complex with the cytoplasmic form of NFS1; this complex increases the stability and cysteine desulfurase activity of NFS1. Interacts with NFS1. Component of a complex composed of FXN, NFS1, LYRM4 and ISCU.

Its subcellular location is the mitochondrion. The protein localises to the nucleus. It functions in the pathway cofactor biosynthesis; iron-sulfur cluster biosynthesis. In terms of biological role, stabilizing factor, of the core iron-sulfur cluster (ISC) assembly complex, that regulates, in association with NDUFAB1, the stability and the cysteine desulfurase activity of NFS1 and participates in the [2Fe-2S] clusters assembly on the scaffolding protein ISCU. The core iron-sulfur cluster (ISC) assembly complex is involved in the de novo synthesis of a [2Fe-2S] cluster, the first step of the mitochondrial iron-sulfur protein biogenesis. This process is initiated by the cysteine desulfurase complex (NFS1:LYRM4:NDUFAB1) that produces persulfide which is delivered on the scaffold protein ISCU in a FXN-dependent manner. Then this complex is stabilized by FDX2 which provides reducing equivalents to accomplish the [2Fe-2S] cluster assembly. Finally, the [2Fe-2S] cluster is transferred from ISCU to chaperone proteins, including HSCB, HSPA9 and GLRX5. May also participates in the iron-sulfur protein biogenesis in the cytoplasm through its interaction with the cytoplasmic form of NFS1. The sequence is that of LYR motif-containing protein 4 from Mus musculus (Mouse).